We begin with the raw amino-acid sequence, 136 residues long: Selenoprotein M (136 aa).

The signal sequence occupies residues 1–19 (MWLPLPLLLGLLQLQPILS). Catalysis depends on nucleophile residues C38 and U41. Positions 38–41 (CGGU) form a cross-link, cysteinyl-selenocysteine (Cys-Sec). Position 41 (U41) is a non-standard amino acid, selenocysteine. A disordered region spans residues 111 to 136 (SSPDAPVPAEFKMAPARASGDTKEDL). The Prevents secretion from ER motif lies at 133-136 (KEDL).

Belongs to the selenoprotein M/F family.

It localises to the endoplasmic reticulum. May function as a thiol-disulfide oxidoreductase that participates in disulfide bond formation. This chain is Selenoprotein M (selenom), found in Xenopus laevis (African clawed frog).